The primary structure comprises 292 residues: ABC transporter ATP-binding protein YtrB (292 aa).

In terms of domain architecture, ABC transporter spans 2-227; the sequence is IELRQLSKAI…YIKIQMAFDT (226 aa). ATP is bound at residue 34 to 41; it reads GRNGSGKT.

Belongs to the ABC transporter superfamily. In terms of assembly, the complex is composed of 2 ATP-binding proteins (YtrB and YtrE), 2 transmembrane proteins (YtrC and YtrD) and a solute-binding protein (YtrF).

It is found in the cell membrane. In terms of biological role, part of the ABC transporter complex YtrBCDEF that plays a role in acetoin utilization during stationary phase and sporulation. The chain is ABC transporter ATP-binding protein YtrB (ytrB) from Bacillus subtilis (strain 168).